The primary structure comprises 86 residues: Myosin light chain alkali (86 aa).

In terms of domain architecture, EF-hand spans 11 to 46 (GCYEDFIECLKLYDKEENGTMMLAELQHALLALGES).

Myosin is a hexamer of 2 heavy chains and 4 light chains.

This Drosophila subobscura (Fruit fly) protein is Myosin light chain alkali (Mlc1).